The chain runs to 360 residues: 3-dehydroquinate synthase (360 aa).

NAD(+) contacts are provided by residues 104 to 108 (GVIGD), 128 to 129 (TT), lysine 141, and 168 to 171 (FLDT). Zn(2+)-binding residues include glutamate 183, histidine 243, and histidine 260.

The protein belongs to the sugar phosphate cyclases superfamily. Dehydroquinate synthase family. Co(2+) is required as a cofactor. It depends on Zn(2+) as a cofactor. Requires NAD(+) as cofactor.

It localises to the cytoplasm. The catalysed reaction is 7-phospho-2-dehydro-3-deoxy-D-arabino-heptonate = 3-dehydroquinate + phosphate. Its pathway is metabolic intermediate biosynthesis; chorismate biosynthesis; chorismate from D-erythrose 4-phosphate and phosphoenolpyruvate: step 2/7. In terms of biological role, catalyzes the conversion of 3-deoxy-D-arabino-heptulosonate 7-phosphate (DAHP) to dehydroquinate (DHQ). In Streptococcus equi subsp. equi (strain 4047), this protein is 3-dehydroquinate synthase.